A 484-amino-acid chain; its full sequence is tRNA sulfurtransferase (484 aa).

One can recognise a THUMP domain in the interval 61–165 (PLILDLLKRT…GDKMLLVEAR (105 aa)). Residues 183–184 (LI), K265, G287, and Q296 contribute to the ATP site. Residues C344 and C456 are joined by a disulfide bond. The region spanning 404–483 (LTEKDIILDI…YQNVKVFNLP (80 aa)) is the Rhodanese domain. C456 serves as the catalytic Cysteine persulfide intermediate.

This sequence belongs to the ThiI family.

It is found in the cytoplasm. It carries out the reaction [ThiI sulfur-carrier protein]-S-sulfanyl-L-cysteine + a uridine in tRNA + 2 reduced [2Fe-2S]-[ferredoxin] + ATP + H(+) = [ThiI sulfur-carrier protein]-L-cysteine + a 4-thiouridine in tRNA + 2 oxidized [2Fe-2S]-[ferredoxin] + AMP + diphosphate. The catalysed reaction is [ThiS sulfur-carrier protein]-C-terminal Gly-Gly-AMP + S-sulfanyl-L-cysteinyl-[cysteine desulfurase] + AH2 = [ThiS sulfur-carrier protein]-C-terminal-Gly-aminoethanethioate + L-cysteinyl-[cysteine desulfurase] + A + AMP + 2 H(+). It functions in the pathway cofactor biosynthesis; thiamine diphosphate biosynthesis. In terms of biological role, catalyzes the ATP-dependent transfer of a sulfur to tRNA to produce 4-thiouridine in position 8 of tRNAs, which functions as a near-UV photosensor. Also catalyzes the transfer of sulfur to the sulfur carrier protein ThiS, forming ThiS-thiocarboxylate. This is a step in the synthesis of thiazole, in the thiamine biosynthesis pathway. The sulfur is donated as persulfide by IscS. The chain is tRNA sulfurtransferase from Haemophilus ducreyi (strain 35000HP / ATCC 700724).